A 130-amino-acid chain; its full sequence is Small ribosomal subunit protein uS9 (130 aa).

A disordered region spans residues 99-130; sequence KSAGMLTRDPRMKERKKPGLKKARKASQFSKR. Basic residues predominate over residues 111–130; that stretch reads KERKKPGLKKARKASQFSKR.

Belongs to the universal ribosomal protein uS9 family.

The polypeptide is Small ribosomal subunit protein uS9 (Latilactobacillus sakei subsp. sakei (strain 23K) (Lactobacillus sakei subsp. sakei)).